A 666-amino-acid polypeptide reads, in one-letter code: MDPQQRLLLEVVYEALEDAGITLDEIQGSLTSVYCGCFTNDYNAMTTKDLEYYPKYTVTGTGNSILANRISYFYNLHGPSATVDTACSSSLVCFHLGAQSLRDAEADISIVVGSALHFDPNIFITMTDLGMLSTDGRCRHGDAAGSGYVRGEGIAAMVLKRQDRAQADGDHIRAVVRGTGVNHDGRKQGITLPSARAQADLITSTYERAGLEPAETTYVECHGTGTKAGDPRELRAVHEVFCRHRPDTLHVGSVKTNIGHLEGASGIAGLMKATMALEKKIIPPNMHFSTPNPEVDFKNWKLEIPTEPKVWEMGRRTIPRRASINSFGYGGTNAHAILEEYNSFGSKTTACQQPTVSLPPELAAMVERRPYLLPLTSHSERAGELWAERLAQYLTENEASVADVALSLSTRRTMHRFRSFAVSADMEKVIERIRDPPPGAAWKSKLDTIPRIGFVFTGQGAQWFGMARSLLEQCPLFLQTIRKCDRILQALPSHRPTWSVEAELLKSQQDTMLGRTEYSQPICTAVQLALVDVLAHWGVKPSGVVGHSSGELAATYAAGLLSFENALVAAYYRGVHMGSGAAAPGSMPGAMMAVGMTEAEVTAELEPYRGRIAIAAMNSPSSFTVSGDEDAVVELQQALTDRKVFARRLQVAQACVFVHSLVIKRY.

Residues 1 to 340 (MDPQQRLLLE…GTNAHAILEE (340 aa)) enclose the Ketosynthase family 3 (KS3) domain. Catalysis depends on for beta-ketoacyl synthase activity residues cysteine 87, histidine 222, and histidine 260. The segment at 455-665 (VFTGQGAQWF…VFVHSLVIKR (211 aa)) is malonyl-CoA:ACP transacylase (MAT) domain. Serine 548 serves as the catalytic For malonyltransferase activity.

This sequence in the C-terminal section; belongs to the NRP synthetase family.

The protein operates within secondary metabolite biosynthesis. In terms of biological role, hybrid PKS-NRPS synthetase; part of the gene cluster that mediates the biosynthesis of pyranterreones, a family of antioxidative compounds. The first step of pyranonigrins biosynthesis is performed by the hybrid PKS-NRPS synthetase pytA that condenses 4 malonyl-CoA units ato the acetyl starter unit by the modular PKS of pytA. The acyl chain is then connected to an L-serine through the amide bond by the modular NRPS of pytA. A tetramic acid is formed and released from the PKS-NRPS pytA to give pyranterreone 5 with the help of the thioesterase pytI. Pyranterreone 5 could be methylated by pytC to afford pyranterreone 6. Both pyranterreones 5 and 6 are subsequently oxidized by the FAD-linked oxidoreductase pytB and the cytochrome P450 monooxygenase pytD to form the fused gamma-pyrone core, resulting in pyranterreones 7 and 11, respectively. The hydroxy group at C-8 of pyranterreones 7 and 11 are dehydrated by the aspartyl protease pytH to form a delta-7 double bond to give pyranterreones 3 and 1, 2 accordingly. The exo-methylene of pyranterreone 3 could be reduced into a pendant methyl by reductase pytE to provide pyranterreone 4, also known as cordylactam. Pyranterreone 4 can be reconverted to pyranterreone 3 through pytB-catalyzed dehydrogenation or further oxidized to pyranterreones 9 and 10. This Aspergillus terreus (strain NIH 2624 / FGSC A1156) protein is Hybrid PKS-NRPS synthetase pytA.